Reading from the N-terminus, the 130-residue chain is Small ribosomal subunit protein uS9 (130 aa).

This sequence belongs to the universal ribosomal protein uS9 family.

This is Small ribosomal subunit protein uS9 (rpsI) from Haemophilus influenzae (strain ATCC 51907 / DSM 11121 / KW20 / Rd).